The sequence spans 290 residues: MRSHILGKIELDQTRLAPDLAYLAAVPTVEEEYDEFSNGFWKHVPLWNASGDSEDRLYRDLKDAAAQPTAHVEHVPYLKEIVTTVFDGTHLQMARSRNLKNAIVIPHRDFVELDREVDRYFRTFMVLEDSPLAFHSNEDTVIHMRPGEIWFLDAATVHSAVNFSEISRQSLCVDFAFDGPFDEKEIFADATLYAPGSTPDLPERRPFTAEHRRRILSLGQVIERENFRDILFLLSKVHYKYDVHPSETYDWLIEISKQAGDEKMVVKAEQIRDFAVEARALSERFSLTSW.

Fe cation-binding residues include histidine 107, aspartate 109, and histidine 158. Arginine 168 serves as a coordination point for 2-oxoglutarate.

It belongs to the L-proline cis-4-/cis-3-hydroxylase family. As to quaternary structure, homodimer. Requires Fe(2+) as cofactor.

It carries out the reaction L-proline + 2-oxoglutarate + O2 = cis-3-hydroxy-L-proline + succinate + CO2. Its activity is regulated as follows. Inhibited by metal ions such as Co(2+), Zn(2+), Ni(2+) or Cu(2+). Is also inhibited by EDTA in vitro. Dioxygenase that catalyzes the 2-oxoglutarate-dependent selective hydroxylation of free L-proline to cis-3-hydroxy-L-proline (cis-3-Hyp). The protein is L-proline cis-3-hydroxylase 2 of Streptomyces sp.